The chain runs to 345 residues: Phosphoribosylformylglycinamidine cyclo-ligase (345 aa).

It belongs to the AIR synthase family.

The protein localises to the cytoplasm. It catalyses the reaction 2-formamido-N(1)-(5-O-phospho-beta-D-ribosyl)acetamidine + ATP = 5-amino-1-(5-phospho-beta-D-ribosyl)imidazole + ADP + phosphate + H(+). It functions in the pathway purine metabolism; IMP biosynthesis via de novo pathway; 5-amino-1-(5-phospho-D-ribosyl)imidazole from N(2)-formyl-N(1)-(5-phospho-D-ribosyl)glycinamide: step 2/2. This Shewanella baltica (strain OS223) protein is Phosphoribosylformylglycinamidine cyclo-ligase.